A 122-amino-acid polypeptide reads, in one-letter code: Large ribosomal subunit protein bL12 (122 aa).

This sequence belongs to the bacterial ribosomal protein bL12 family. As to quaternary structure, homodimer. Part of the ribosomal stalk of the 50S ribosomal subunit. Forms a multimeric L10(L12)X complex, where L10 forms an elongated spine to which 2 to 4 L12 dimers bind in a sequential fashion. Binds GTP-bound translation factors.

In terms of biological role, forms part of the ribosomal stalk which helps the ribosome interact with GTP-bound translation factors. Is thus essential for accurate translation. The chain is Large ribosomal subunit protein bL12 from Shewanella loihica (strain ATCC BAA-1088 / PV-4).